A 309-amino-acid polypeptide reads, in one-letter code: MILTVTLNPAIDVSYPLNELKCDTVNRVVDVTKTPGGKGLNVSRVLNDFGETVKATGCIGGESGDFIINHLPDSILSRFYKISGDTRTCIAILHEGNQTEILEKGPLLSVDEIDGFTHHFKYLLNDVDVVTLSGSLPAGMPDDYYQKLIKIANLNGKKTVLDCSGNALEAVLKGDSKPTVIKPNLEELSQLLGKEMTKDFEALKEVLQDELFEGIEWIIVSLGADGVFAKHKDTFYNVDIPKIKIVSAVGSGDSTVAGIASGLANDEDDRALLTKANVLGMLNAQEKTTGHVNMANYDKLYQSIKVKEV.

It belongs to the carbohydrate kinase PfkB family. LacC subfamily.

It carries out the reaction D-tagatofuranose 6-phosphate + ATP = D-tagatofuranose 1,6-bisphosphate + ADP + H(+). The protein operates within carbohydrate metabolism; D-tagatose 6-phosphate degradation; D-glyceraldehyde 3-phosphate and glycerone phosphate from D-tagatose 6-phosphate: step 1/2. This is Tagatose-6-phosphate kinase from Streptococcus pyogenes serotype M28 (strain MGAS6180).